The following is a 247-amino-acid chain: UDP-2,3-diacylglucosamine hydrolase (247 aa).

Mn(2+) contacts are provided by D8, H10, D41, N79, and H115. 79-80 provides a ligand contact to substrate; it reads NH. Positions 123, 165, 168, and 196 each coordinate substrate. Residues H196 and H198 each contribute to the Mn(2+) site.

The protein belongs to the LpxH family. The cofactor is Mn(2+).

It is found in the cell inner membrane. It catalyses the reaction UDP-2-N,3-O-bis[(3R)-3-hydroxytetradecanoyl]-alpha-D-glucosamine + H2O = 2-N,3-O-bis[(3R)-3-hydroxytetradecanoyl]-alpha-D-glucosaminyl 1-phosphate + UMP + 2 H(+). Its pathway is glycolipid biosynthesis; lipid IV(A) biosynthesis; lipid IV(A) from (3R)-3-hydroxytetradecanoyl-[acyl-carrier-protein] and UDP-N-acetyl-alpha-D-glucosamine: step 4/6. Its function is as follows. Hydrolyzes the pyrophosphate bond of UDP-2,3-diacylglucosamine to yield 2,3-diacylglucosamine 1-phosphate (lipid X) and UMP by catalyzing the attack of water at the alpha-P atom. Involved in the biosynthesis of lipid A, a phosphorylated glycolipid that anchors the lipopolysaccharide to the outer membrane of the cell. The sequence is that of UDP-2,3-diacylglucosamine hydrolase from Blochmanniella floridana.